Here is a 215-residue protein sequence, read N- to C-terminus: MKRTKQINHASFRKHWRAYRMAPVALAVGAVFVLAGCEKSDENVSLYMNSDDCARANPSLSEQCTTAYNAAQQEAVKTAPKYASRADCVAEFGEEQCTQVPAQAGMAAESQHSGSMWMPLMAGYMMGRMMVGGYSQQPLFTSLAANSPARGQFVDARGRNYGASTSGRSMTVPKTALAPKPATTQTITRGGFGETVAKQNALRSSSATPHRTMGG.

It belongs to the UPF0441 family.

The polypeptide is UPF0441 protein SG0265 (Sodalis glossinidius (strain morsitans)).